The following is a 31-amino-acid chain: Protamine PTP4 (31 aa).

The tract at residues 1 to 31 is disordered; that stretch reads MPRRRRASRRIRRRRRPRVSRRRRGGRRRRR.

Testis.

The protein localises to the nucleus. Its subcellular location is the chromosome. Protamines substitute for histones in the chromatin of sperm during the haploid phase of spermatogenesis. They compact sperm DNA into a highly condensed, stable and inactive complex. The sequence is that of Protamine PTP4 from Oncorhynchus mykiss (Rainbow trout).